The following is a 192-amino-acid chain: Hydrophobin-like protein rodD (192 aa).

3 cysteine pairs are disulfide-bonded: cysteine 45/cysteine 106, cysteine 50/cysteine 99, and cysteine 107/cysteine 112.

It belongs to the fungal hydrophobin family. As to quaternary structure, self-assembles to form functional amyloid fibrils called rodlets. Self-assembly into fibrillar rodlets occurs spontaneously at hydrophobic:hydrophilic interfaces and the rodlets further associate laterally to form amphipathic monolayers.

Functionally, aerial growth, conidiation, and dispersal of filamentous fungi in the environment rely upon a capability of their secreting small amphipathic proteins called hydrophobins (HPBs) with low sequence identity. Class I can self-assemble into an outermost layer of rodlet bundles on aerial cell surfaces, conferring cellular hydrophobicity that supports fungal growth, development and dispersal; whereas Class II form highly ordered films at water-air interfaces through intermolecular interactions but contribute nothing to the rodlet structure. RodD is a an hydrophobin-like protein that, unlike rodA, is not required for rodlet formation. The protein is Hydrophobin-like protein rodD of Aspergillus fumigatus (strain ATCC MYA-4609 / CBS 101355 / FGSC A1100 / Af293) (Neosartorya fumigata).